The sequence spans 367 residues: Hyaluronidase (367 aa).

2 cysteine pairs are disulfide-bonded: cysteine 48–cysteine 337 and cysteine 214–cysteine 226. A glycan (N-linked (GlcNAc...) asparagine) is linked at asparagine 108. The active-site Proton donor is the glutamate 138. An N-linked (GlcNAc...) asparagine glycan is attached at asparagine 354.

It belongs to the glycosyl hydrolase 56 family.

The enzyme catalyses Random hydrolysis of (1-&gt;4)-linkages between N-acetyl-beta-D-glucosamine and D-glucuronate residues in hyaluronate.. Its function is as follows. May play a role in reproduction. The protein is Hyaluronidase of Polistes annularis (Paper wasp).